A 535-amino-acid polypeptide reads, in one-letter code: Peptide chain release factor 3 (535 aa).

Positions 8–276 (ARRRTFAIIS…ALVEQAPPPG (269 aa)) constitute a tr-type G domain. GTP-binding positions include 17 to 24 (SHPDAGKT), 85 to 89 (DTPGH), and 139 to 142 (NKMD).

The protein belongs to the TRAFAC class translation factor GTPase superfamily. Classic translation factor GTPase family. PrfC subfamily.

Its subcellular location is the cytoplasm. Increases the formation of ribosomal termination complexes and stimulates activities of RF-1 and RF-2. It binds guanine nucleotides and has strong preference for UGA stop codons. It may interact directly with the ribosome. The stimulation of RF-1 and RF-2 is significantly reduced by GTP and GDP, but not by GMP. This Bordetella petrii (strain ATCC BAA-461 / DSM 12804 / CCUG 43448) protein is Peptide chain release factor 3.